The chain runs to 391 residues: MSAPAPEATIGTLPSLLGATREELGDALAAIGVPEREIRMRTAQVWHWIYFHGIRSFDTMLNVGKGLRTTLAAHYSLERPQVVSEQVSVDGTRKWLIRLPPVDAQDRGAEVECVYIPESDRGTLCISSQVGCTLTCSFCHTGTQKLVRNLSAREIVSQLVVAREKLGDFPGLVPPKDGLLPTEGNRPITNIVFMGMGEPLYNFDNVRKAVSVLSDGEGLSLSRRRITVSTAGVVPQMEALGREAGSMLAVSLHAVRDDLRDKLVPLNKKYPIKTLLEACRTYPGASNARRITFEYVMLKDINDSPAEARELIRLLKGIPAKINLIPFNPWPGAPYDCSDWDRIERFSDIVFNAGYASPVRTPRGRDILAACGQLKSETEKLRARARLLGED.

Catalysis depends on Glu-112, which acts as the Proton acceptor. In terms of domain architecture, Radical SAM core spans 118-368 (ESDRGTLCIS…VRTPRGRDIL (251 aa)). A disulfide bridge links Cys-125 with Cys-371. [4Fe-4S] cluster is bound by residues Cys-132, Cys-136, and Cys-139. S-adenosyl-L-methionine is bound by residues 197 to 198 (GE), Ser-229, 251 to 253 (SLH), and Asn-328. Cys-371 (S-methylcysteine intermediate) is an active-site residue.

This sequence belongs to the radical SAM superfamily. RlmN family. It depends on [4Fe-4S] cluster as a cofactor.

The protein resides in the cytoplasm. The enzyme catalyses adenosine(2503) in 23S rRNA + 2 reduced [2Fe-2S]-[ferredoxin] + 2 S-adenosyl-L-methionine = 2-methyladenosine(2503) in 23S rRNA + 5'-deoxyadenosine + L-methionine + 2 oxidized [2Fe-2S]-[ferredoxin] + S-adenosyl-L-homocysteine. It catalyses the reaction adenosine(37) in tRNA + 2 reduced [2Fe-2S]-[ferredoxin] + 2 S-adenosyl-L-methionine = 2-methyladenosine(37) in tRNA + 5'-deoxyadenosine + L-methionine + 2 oxidized [2Fe-2S]-[ferredoxin] + S-adenosyl-L-homocysteine. Its function is as follows. Specifically methylates position 2 of adenine 2503 in 23S rRNA and position 2 of adenine 37 in tRNAs. m2A2503 modification seems to play a crucial role in the proofreading step occurring at the peptidyl transferase center and thus would serve to optimize ribosomal fidelity. In Beijerinckia indica subsp. indica (strain ATCC 9039 / DSM 1715 / NCIMB 8712), this protein is Dual-specificity RNA methyltransferase RlmN.